Consider the following 125-residue polypeptide: Phosphoribosyl-AMP cyclohydrolase (125 aa).

D74 serves as a coordination point for Mg(2+). Position 75 (C75) interacts with Zn(2+). Residues D76 and D78 each coordinate Mg(2+). Residues C92 and C99 each contribute to the Zn(2+) site.

This sequence belongs to the PRA-CH family. In terms of assembly, homodimer. It depends on Mg(2+) as a cofactor. Requires Zn(2+) as cofactor.

It is found in the cytoplasm. It catalyses the reaction 1-(5-phospho-beta-D-ribosyl)-5'-AMP + H2O = 1-(5-phospho-beta-D-ribosyl)-5-[(5-phospho-beta-D-ribosylamino)methylideneamino]imidazole-4-carboxamide. It participates in amino-acid biosynthesis; L-histidine biosynthesis; L-histidine from 5-phospho-alpha-D-ribose 1-diphosphate: step 3/9. Its function is as follows. Catalyzes the hydrolysis of the adenine ring of phosphoribosyl-AMP. The sequence is that of Phosphoribosyl-AMP cyclohydrolase from Geobacter sp. (strain M21).